The following is a 957-amino-acid chain: Nitrite reductase [NAD(P)H] large subunit (957 aa).

Position 44–79 (44–79 (YDRVHLTEYFAGRSAESLSLVEGDFFTQHGIELRLS)) interacts with FAD. 193 to 225 (LREKISELGVGVHTSKATTEIVRNEQGLQLNFR) lines the NAD(+) pocket. [2Fe-2S] cluster contacts are provided by Cys-423, Cys-425, Cys-457, and Cys-460. Residues Cys-639, Cys-645, Cys-679, and Cys-683 each coordinate [4Fe-4S] cluster. Position 683 (Cys-683) interacts with siroheme.

Belongs to the nitrite and sulfite reductase 4Fe-4S domain family. In terms of assembly, homodimer which associates with NirD. The cofactor is siroheme. It depends on [2Fe-2S] cluster as a cofactor. [4Fe-4S] cluster is required as a cofactor. Requires FAD as cofactor.

The enzyme catalyses NH4(+) + 3 NADP(+) + 2 H2O = nitrite + 3 NADPH + 5 H(+). The catalysed reaction is NH4(+) + 3 NAD(+) + 2 H2O = nitrite + 3 NADH + 5 H(+). The protein operates within nitrogen metabolism; nitrate reduction (assimilation). The sequence is that of Nitrite reductase [NAD(P)H] large subunit (nasB) from Klebsiella oxytoca.